Reading from the N-terminus, the 234-residue chain is Adenosine 5'-phosphosulfate reductase (234 aa).

Positions 120, 121, 203, and 206 each coordinate [4Fe-4S] cluster. Residue Cys229 is the Nucleophile; cysteine thiosulfonate intermediate of the active site.

The protein belongs to the PAPS reductase family. CysH subfamily. [4Fe-4S] cluster is required as a cofactor.

Its subcellular location is the cytoplasm. It catalyses the reaction [thioredoxin]-disulfide + sulfite + AMP + 2 H(+) = adenosine 5'-phosphosulfate + [thioredoxin]-dithiol. It functions in the pathway sulfur metabolism; hydrogen sulfide biosynthesis; sulfite from sulfate. Its function is as follows. Catalyzes the formation of sulfite from adenosine 5'-phosphosulfate (APS) using thioredoxin as an electron donor. The protein is Adenosine 5'-phosphosulfate reductase of Bacillus cereus (strain ATCC 14579 / DSM 31 / CCUG 7414 / JCM 2152 / NBRC 15305 / NCIMB 9373 / NCTC 2599 / NRRL B-3711).